A 244-amino-acid polypeptide reads, in one-letter code: Probable transcriptional regulatory protein XF_1906 (244 aa).

This sequence belongs to the TACO1 family.

The protein resides in the cytoplasm. This chain is Probable transcriptional regulatory protein XF_1906, found in Xylella fastidiosa (strain 9a5c).